Consider the following 145-residue polypeptide: Large ribosomal subunit protein uL11 (145 aa).

It belongs to the universal ribosomal protein uL11 family. Part of the ribosomal stalk of the 50S ribosomal subunit. Interacts with L10 and the large rRNA to form the base of the stalk. L10 forms an elongated spine to which L12 dimers bind in a sequential fashion forming a multimeric L10(L12)X complex. In terms of processing, one or more lysine residues are methylated.

Its function is as follows. Forms part of the ribosomal stalk which helps the ribosome interact with GTP-bound translation factors. This Rickettsia massiliae (strain Mtu5) protein is Large ribosomal subunit protein uL11.